We begin with the raw amino-acid sequence, 955 residues long: RNA polymerase-associated protein RapA (955 aa).

Residues 163 to 333 (EVGHRYAPRV…FARLRLLDPE (171 aa)) enclose the Helicase ATP-binding domain. 176-183 (DEVGLGKT) is an ATP binding site. Residues 279-282 (DEAH) carry the DEAH box motif. One can recognise a Helicase C-terminal domain in the interval 478-642 (RVDWLLELLL…AVRDELFELL (165 aa)).

The protein belongs to the SNF2/RAD54 helicase family. RapA subfamily. Interacts with the RNAP. Has a higher affinity for the core RNAP than for the holoenzyme. Its ATPase activity is stimulated by binding to RNAP.

Transcription regulator that activates transcription by stimulating RNA polymerase (RNAP) recycling in case of stress conditions such as supercoiled DNA or high salt concentrations. Probably acts by releasing the RNAP, when it is trapped or immobilized on tightly supercoiled DNA. Does not activate transcription on linear DNA. Probably not involved in DNA repair. This is RNA polymerase-associated protein RapA from Aeromonas salmonicida (strain A449).